The following is a 547-amino-acid chain: Vacuolar fusion protein MON1 homolog B (547 aa).

N-acetylmethionine is present on M1. Residues 1–106 (MEAGGDTAAP…GGDPSDEEWR (106 aa)) form a disordered region. The span at 57–66 (PPSPSPPPQS) shows a compositional bias: pro residues. S59 and S61 each carry phosphoserine.

It belongs to the MON1/SAND family. In terms of assembly, interacts with CCNT2; down-regulates CCNT2-mediated activation of viral promoters during herpes simplex virus 1/HHV-1 infection. Found in a complex with RMC1, CCZ1 MON1A and MON1B.

This is Vacuolar fusion protein MON1 homolog B (MON1B) from Macaca fascicularis (Crab-eating macaque).